A 187-amino-acid chain; its full sequence is MADQLSEEQIGEFREAFSLFDKDGDGSITTKELGTVMRSLGQNPTEAELQDMISEVDTDSNGNIEFKEFLGLMARKLRDKDSEEELKEAFRVFDKDQNGFISATELRHVMANIGERLTDEEVGEMISEADVDGDGQINYEEFVKCMMAKKRRKRIEEKRDHDGGSRTKSAGPSAAPASKRGQKCVIL.

N-acetylalanine is present on Ala-2. EF-hand domains are found at residues 8 to 43, 44 to 79, 81 to 116, and 117 to 152; these read EQIG…LGQN, PTEA…KLRD, DSEE…IGER, and LTDE…KKRR. Ca(2+) contacts are provided by Asp-21, Asp-23, Asp-25, Ser-27, Glu-32, Asp-57, Asp-59, Asn-61, Asn-63, Glu-68, Asp-94, Asp-96, Asn-98, Glu-105, Asp-130, Asp-132, Asp-134, Gln-136, and Glu-141. Residues 153 to 187 are disordered; sequence KRIEEKRDHDGGSRTKSAGPSAAPASKRGQKCVIL. Positions 154–165 are enriched in basic and acidic residues; the sequence is RIEEKRDHDGGS. Over residues 169 to 178 the composition is skewed to low complexity; the sequence is SAGPSAAPAS. Cys-184 carries the cysteine methyl ester modification. Cys-184 carries the S-farnesyl cysteine lipid modification. Residues 185-187 constitute a propeptide, removed in mature form; the sequence is VIL.

The protein belongs to the calmodulin family.

It localises to the membrane. Its function is as follows. Calcium-binding protein that binds and activates CAMK1, a calcium/calmodulin-dependent kinase. The chain is Calmodulin-like protein 1 (CML1) from Oryza sativa subsp. japonica (Rice).